Reading from the N-terminus, the 302-residue chain is 4-hydroxy-tetrahydrodipicolinate synthase (302 aa).

Thr-56 is a pyruvate binding site. The active-site Proton donor/acceptor is Tyr-145. Lys-173 serves as the catalytic Schiff-base intermediate with substrate. Residue Val-215 participates in pyruvate binding.

The protein belongs to the DapA family. In terms of assembly, homotetramer; dimer of dimers.

The protein localises to the cytoplasm. The enzyme catalyses L-aspartate 4-semialdehyde + pyruvate = (2S,4S)-4-hydroxy-2,3,4,5-tetrahydrodipicolinate + H2O + H(+). It participates in amino-acid biosynthesis; L-lysine biosynthesis via DAP pathway; (S)-tetrahydrodipicolinate from L-aspartate: step 3/4. Catalyzes the condensation of (S)-aspartate-beta-semialdehyde [(S)-ASA] and pyruvate to 4-hydroxy-tetrahydrodipicolinate (HTPA). This chain is 4-hydroxy-tetrahydrodipicolinate synthase, found in Prochlorococcus marinus subsp. pastoris (strain CCMP1986 / NIES-2087 / MED4).